Consider the following 194-residue polypeptide: Transcriptional repressor NrdR (194 aa).

Residues 3–33 fold into a zinc finger; the sequence is CPFCGHADDRVLDTRVQKDGSIRRRRECLEC. Residues 48 to 138 form the ATP-cone domain; it reads PFIIKKDGRR…VYRTFKDVQE (91 aa). The span at 168-179 shows a compositional bias: basic and acidic residues; that stretch reads ESEKSTNHETDS. Positions 168 to 194 are disordered; sequence ESEKSTNHETDSKTPSPRTRPPGPLSN. Over residues 185–194 the composition is skewed to pro residues; the sequence is RTRPPGPLSN.

Belongs to the NrdR family. Zn(2+) serves as cofactor.

Functionally, negatively regulates transcription of bacterial ribonucleotide reductase nrd genes and operons by binding to NrdR-boxes. This is Transcriptional repressor NrdR from Bdellovibrio bacteriovorus (strain ATCC 15356 / DSM 50701 / NCIMB 9529 / HD100).